The primary structure comprises 892 residues: Alanine--tRNA ligase (892 aa).

4 residues coordinate Zn(2+): histidine 596, histidine 600, cysteine 700, and histidine 704.

It belongs to the class-II aminoacyl-tRNA synthetase family. Requires Zn(2+) as cofactor.

The protein localises to the cytoplasm. It catalyses the reaction tRNA(Ala) + L-alanine + ATP = L-alanyl-tRNA(Ala) + AMP + diphosphate. Catalyzes the attachment of alanine to tRNA(Ala) in a two-step reaction: alanine is first activated by ATP to form Ala-AMP and then transferred to the acceptor end of tRNA(Ala). Also edits incorrectly charged Ser-tRNA(Ala) and Gly-tRNA(Ala) via its editing domain. The protein is Alanine--tRNA ligase of Methanococcus maripaludis (strain C5 / ATCC BAA-1333).